Consider the following 69-residue polypeptide: Cytochrome c oxidase subunit 8A, mitochondrial (69 aa).

The N-terminal 25 residues, 1–25 (MSVLTPLLLRGLTGSARRLPVPRAQ), are a transit peptide targeting the mitochondrion. The SIFI-degron motif lies at 2 to 19 (SVLTPLLLRGLTGSARRL). Over 26 to 36 (VHSMPPEQKLG) the chain is Mitochondrial matrix. A helical membrane pass occupies residues 37–60 (VLELAIGFTSCLVTFLLPAGWILS). Over 61 to 69 (HLDSYKKRG) the chain is Mitochondrial intermembrane.

It belongs to the cytochrome c oxidase VIII family. Component of the cytochrome c oxidase (complex IV, CIV), a multisubunit enzyme composed of 14 subunits. The complex is composed of a catalytic core of 3 subunits MT-CO1, MT-CO2 and MT-CO3, encoded in the mitochondrial DNA, and 11 supernumerary subunits COX4I, COX5A, COX5B, COX6A, COX6B, COX6C, COX7A, COX7B, COX7C, COX8 and NDUFA4, which are encoded in the nuclear genome. The complex exists as a monomer or a dimer and forms supercomplexes (SCs) in the inner mitochondrial membrane with NADH-ubiquinone oxidoreductase (complex I, CI) and ubiquinol-cytochrome c oxidoreductase (cytochrome b-c1 complex, complex III, CIII), resulting in different assemblies (supercomplex SCI(1)III(2)IV(1) and megacomplex MCI(2)III(2)IV(2)). Post-translationally, in response to mitochondrial stress, the precursor protein is ubiquitinated by the SIFI complex in the cytoplasm before mitochondrial import, leading to its degradation. Within the SIFI complex, UBR4 initiates ubiquitin chain that are further elongated or branched by KCMF1.

The protein localises to the mitochondrion inner membrane. Its pathway is energy metabolism; oxidative phosphorylation. Its function is as follows. Component of the cytochrome c oxidase, the last enzyme in the mitochondrial electron transport chain which drives oxidative phosphorylation. The respiratory chain contains 3 multisubunit complexes succinate dehydrogenase (complex II, CII), ubiquinol-cytochrome c oxidoreductase (cytochrome b-c1 complex, complex III, CIII) and cytochrome c oxidase (complex IV, CIV), that cooperate to transfer electrons derived from NADH and succinate to molecular oxygen, creating an electrochemical gradient over the inner membrane that drives transmembrane transport and the ATP synthase. Cytochrome c oxidase is the component of the respiratory chain that catalyzes the reduction of oxygen to water. Electrons originating from reduced cytochrome c in the intermembrane space (IMS) are transferred via the dinuclear copper A center (CU(A)) of subunit 2 and heme A of subunit 1 to the active site in subunit 1, a binuclear center (BNC) formed by heme A3 and copper B (CU(B)). The BNC reduces molecular oxygen to 2 water molecules using 4 electrons from cytochrome c in the IMS and 4 protons from the mitochondrial matrix. This chain is Cytochrome c oxidase subunit 8A, mitochondrial (COX8A), found in Saimiri sciureus (Common squirrel monkey).